Here is a 680-residue protein sequence, read N- to C-terminus: Enzymatic polyprotein (680 aa).

Residues 41-131 are protease; that stretch reads LHCFVDTGAS…LYEPFIQFTD (91 aa). Asp46 is an active-site residue. The Reverse transcriptase domain maps to 273–453; it reads LKVIKPSKSP…KKINFLGLEI (181 aa).

The protein belongs to the caulimoviridae enzymatic polyprotein family.

The catalysed reaction is DNA(n) + a 2'-deoxyribonucleoside 5'-triphosphate = DNA(n+1) + diphosphate. Encodes for at least two polypeptides: protease (PR) and reverse transcriptase (RT). The protease processes the polyprotein in cis. Reverse transcriptase is multifunctional enzyme that converts the viral RNA genome into dsDNA in viral cytoplasmic capsids. This enzyme displays a DNA polymerase activity that can copy either DNA or RNA templates, and a ribonuclease H (RNase H) activity that cleaves the RNA strand of RNA-DNA heteroduplexes in a partially processive 3'- to 5'-endonucleasic mode. Neo-synthesized pregenomic RNA (pgRNA) are encapsidated, and reverse-transcribed inside the nucleocapsid. Partial (+)DNA is synthesized from the (-)DNA template and generates the relaxed circular DNA (RC-DNA) genome. After budding and infection, the RC-DNA migrates in the nucleus, and is converted into a plasmid-like covalently closed circular DNA (cccDNA). This chain is Enzymatic polyprotein, found in Cauliflower mosaic virus (strain NY8153) (CaMV).